The sequence spans 123 residues: Small ribosomal subunit protein uS12 (123 aa).

A disordered region spans residues 1-23 (MPTISQLVKKGREKVEKKTKSPA). The residue at position 89 (aspartate 89) is a 3-methylthioaspartic acid.

It belongs to the universal ribosomal protein uS12 family. Part of the 30S ribosomal subunit. Contacts proteins S8 and S17. May interact with IF1 in the 30S initiation complex.

With S4 and S5 plays an important role in translational accuracy. Its function is as follows. Interacts with and stabilizes bases of the 16S rRNA that are involved in tRNA selection in the A site and with the mRNA backbone. Located at the interface of the 30S and 50S subunits, it traverses the body of the 30S subunit contacting proteins on the other side and probably holding the rRNA structure together. The combined cluster of proteins S8, S12 and S17 appears to hold together the shoulder and platform of the 30S subunit. In Thermodesulfovibrio yellowstonii (strain ATCC 51303 / DSM 11347 / YP87), this protein is Small ribosomal subunit protein uS12.